A 359-amino-acid chain; its full sequence is Peptide chain release factor 1 (359 aa).

Gln233 bears the N5-methylglutamine mark.

The protein belongs to the prokaryotic/mitochondrial release factor family. In terms of processing, methylated by PrmC. Methylation increases the termination efficiency of RF1.

The protein localises to the cytoplasm. Its function is as follows. Peptide chain release factor 1 directs the termination of translation in response to the peptide chain termination codons UAG and UAA. This is Peptide chain release factor 1 from Cytophaga hutchinsonii (strain ATCC 33406 / DSM 1761 / CIP 103989 / NBRC 15051 / NCIMB 9469 / D465).